The sequence spans 83 residues: Acid shock protein (83 aa).

Positions 1 to 21 (MKKVLALVVAAAMGLSSAAFA) are cleaved as a signal peptide. Low complexity predominate over residues 22–40 (AETATPAKTATPAKTTQNT). Residues 22–56 (AETATPAKTATPAKTTQNTQHHKKQHKKTVEQKAQ) constitute a propeptide that is removed on maturation. The segment at 22 to 83 (AETATPAKTA…TSKTTSQPAA (62 aa)) is disordered. The segment covering 57-70 (AAKKHQKKDGKKAP) has biased composition (basic residues). Over residues 71 to 83 (AKSTSKTTSQPAA) the composition is skewed to low complexity.

This sequence belongs to the Asr family. Proteolytic processing gives rise to the active protein.

It localises to the periplasm. Functionally, required for growth and/or survival at acidic conditions. The protein is Acid shock protein of Salmonella heidelberg (strain SL476).